The primary structure comprises 1488 residues: Phenolphthiocerol/phthiocerol polyketide synthase subunit E (1488 aa).

Residues E5–E438 enclose the Ketosynthase family 3 (KS3) domain. Active-site for beta-ketoacyl synthase activity residues include C184, H320, and H361. Residues V551 to V868 are acyltransferase. S641 serves as the catalytic For malonyltransferase activity. The region spanning N930–F1004 is the Carrier domain. S965 is modified (O-(pantetheine 4'-phosphoryl)serine). E1286–L1331 is a binding site for NADP(+).

NADP(+) serves as cofactor. Requires pantetheine 4'-phosphate as cofactor.

The enzyme catalyses icosanoyl-[(phenol)carboxyphthiodiolenone synthase] + 2 (S)-methylmalonyl-CoA + 3 malonyl-CoA + 5 NADPH + 10 H(+) = C32-carboxyphthiodiolenone-[(phenol)carboxyphthiodiolenone synthase] + 5 CO2 + 5 NADP(+) + 5 CoA + 2 H2O. It catalyses the reaction docosanoyl-[(phenol)carboxyphthiodiolenone synthase] + 2 (S)-methylmalonyl-CoA + 3 malonyl-CoA + 5 NADPH + 10 H(+) = C34-carboxyphthiodiolenone-[(phenol)carboxyphthiodiolenone synthase] + 5 CO2 + 5 NADP(+) + 5 CoA + 2 H2O. The catalysed reaction is 17-(4-hydroxyphenyl)heptadecanoyl-[(phenol)carboxyphthiodiolenone synthase] + 2 (S)-methylmalonyl-CoA + 3 malonyl-CoA + 5 NADPH + 10 H(+) = C35-(phenol)carboxyphthiodiolenone-[(phenol)carboxyphthiodiolenone synthase] + 5 CO2 + 5 NADP(+) + 5 CoA + 2 H2O. It carries out the reaction 19-(4-hydroxyphenyl)nonadecanoyl-[(phenol)carboxyphthiodiolenone synthase] + 2 (S)-methylmalonyl-CoA + 3 malonyl-CoA + 5 NADPH + 10 H(+) = C37-(phenol)carboxyphthiodiolenone-[(phenol)carboxyphthiodiolenone synthase] + 5 CO2 + 5 NADP(+) + 5 CoA + 2 H2O. The protein operates within lipid metabolism; fatty acid biosynthesis. Functionally, part of the PpsABCDE complex involved in the biosynthesis of the lipid core common to phthiocerols and phenolphthiocerols by successive additions of malonyl-CoA or methylmalonyl-CoA extender units. PpsA can accept as substrate the activated forms of either icosanoyl (C20), docosanoyl (C22) or lignoceroyl (C24) groups from FadD26, or a (4-hydroxyphenyl)-C17 or (4-hydroxyphenyl)-C19 fatty acyl from FadD29. PpsA initiates the biosynthesis and extends its substrate using a malonyl-CoA extender unit. The PpsB and PpsC proteins add the second and third malonyl-CoA extender units. PpsD adds an (R)-methylmalonyl unit and PpsE adds a second (R)-methylmalonyl unit. The incorporation of the methylmalonyl units results in formation of two branched methyl groups in the elongated product. In Mycobacterium bovis (strain ATCC BAA-935 / AF2122/97), this protein is Phenolphthiocerol/phthiocerol polyketide synthase subunit E (ppsE).